The following is a 761-amino-acid chain: Mitochondrial intermediate peptidase (761 aa).

Residues 1-37 constitute a mitochondrion transit peptide; that stretch reads MLIQKILLNKEISRLPRILSILNYTGLRWLSGSSGRN. Histidine 547 contacts Zn(2+). Glutamate 548 is an active-site residue. Residues histidine 551 and histidine 554 each contribute to the Zn(2+) site.

Belongs to the peptidase M3 family. The cofactor is Zn(2+).

It localises to the mitochondrion matrix. It catalyses the reaction Release of an N-terminal octapeptide as second stage of processing of some proteins imported into the mitochondrion.. Functionally, cleaves proteins, imported into the mitochondrion, to their mature size. While most mitochondrial precursor proteins are processed to the mature form in one step by mitochondrial processing peptidase (MPP), the sequential cleavage by MIP of an octapeptide after initial processing by MPP is a required step for a subgroup of nuclear-encoded precursor proteins destined for the matrix or the inner membrane. This chain is Mitochondrial intermediate peptidase (OCT1), found in Candida glabrata (strain ATCC 2001 / BCRC 20586 / JCM 3761 / NBRC 0622 / NRRL Y-65 / CBS 138) (Yeast).